Here is a 466-residue protein sequence, read N- to C-terminus: Cytochrome P450 85A1 (466 aa).

The helical transmembrane segment at 1–21 (MVLAVLIGVLVGIVLVSSLLL) threads the bilayer. Cysteine 416 lines the heme pocket.

It belongs to the cytochrome P450 family. Heme is required as a cofactor.

The protein resides in the membrane. The catalysed reaction is 6-deoxoteasterone + reduced [NADPH--hemoprotein reductase] + O2 = 6alpha-hydroxyteasterone + oxidized [NADPH--hemoprotein reductase] + H2O + H(+). It carries out the reaction 6alpha-hydroxytyphasterol + reduced [NADPH--hemoprotein reductase] + O2 = teasterone + oxidized [NADPH--hemoprotein reductase] + 2 H2O + H(+). It catalyses the reaction 3-dehydro-6-deoxoteasterone + reduced [NADPH--hemoprotein reductase] + O2 = 3-dehydro-6alpha-hydroxyteasterone + oxidized [NADPH--hemoprotein reductase] + H2O + H(+). The enzyme catalyses 3-dehydro-6alpha-hydroxyteasterone + reduced [NADPH--hemoprotein reductase] + O2 = 3-dehydroteasterone + oxidized [NADPH--hemoprotein reductase] + 2 H2O + H(+). The catalysed reaction is 6-deoxotyphasterol + reduced [NADPH--hemoprotein reductase] + O2 = 6alpha-hydroxytyphasterol + oxidized [NADPH--hemoprotein reductase] + H2O + H(+). It carries out the reaction 6alpha-hydroxytyphasterol + reduced [NADPH--hemoprotein reductase] + O2 = typhasterol + oxidized [NADPH--hemoprotein reductase] + 2 H2O + H(+). It catalyses the reaction 6-deoxocastasterone + reduced [NADPH--hemoprotein reductase] + O2 = 6alpha-hydroxycastasterone + oxidized [NADPH--hemoprotein reductase] + H2O + H(+). The enzyme catalyses 6alpha-hydroxycastasterone + reduced [NADPH--hemoprotein reductase] + O2 = castasterone + oxidized [NADPH--hemoprotein reductase] + 2 H2O + H(+). The catalysed reaction is 3-dehydro-6-deoxoteasterone + 2 reduced [NADPH--hemoprotein reductase] + 2 O2 = 3-dehydroteasterone + 2 oxidized [NADPH--hemoprotein reductase] + 3 H2O + 2 H(+). It carries out the reaction 6-deoxocastasterone + 2 reduced [NADPH--hemoprotein reductase] + 2 O2 = castasterone + 2 oxidized [NADPH--hemoprotein reductase] + 3 H2O + 2 H(+). It catalyses the reaction 6-deoxoteasterone + 2 reduced [NADPH--hemoprotein reductase] + 2 O2 = teasterone + 2 oxidized [NADPH--hemoprotein reductase] + 3 H2O + 2 H(+). The enzyme catalyses 6-deoxotyphasterol + 2 reduced [NADPH--hemoprotein reductase] + 2 O2 = typhasterol + 2 oxidized [NADPH--hemoprotein reductase] + 3 H2O + 2 H(+). It functions in the pathway plant hormone biosynthesis; brassinosteroid biosynthesis. In terms of biological role, involved in reduction steps of the biosynthesis of plant campesterol-derivative steroids, ending to castasterone (CS) but missing brassinolide (BL). Catalyzes the C6-oxidation step in brassinosteroids biosynthesis; the conversion of 6-deoxoteasterone (6-deoxoTE) to teasterone (TE), 3-dehydro-6-deoxoteasterone (6-deoxo3DT, 6-deoxo-3-DHT) to 3-dehydroteasterone (3DT, 3-DHT), 6-deoxotyphasterol (6-deoxoTY) to typhasterol (TY) and of 6-deoxocastasterone (6-deoxoCS) to castasterone (CS). In Brachypodium distachyon (Purple false brome), this protein is Cytochrome P450 85A1.